A 370-amino-acid chain; its full sequence is MDLLKSPLYSKYVESNAKLVNFAGWEMPISFSGLIKEHESVRSSAGLFDISHMGVISIKGINPKDYIQKLFPTNLYSFSEGQGLYTVMLNDKGGIIDDLIIYDLGIQENDLSELLLIVNASRYEEDFQWIKNNLNMSEISITNFKKDKVLLALQGKNSFDLFEEWIESSISYIPTFGCEYKIFEHISPKEKIFFSKTGYTGENGLEILLSKKAAINLWDFSISKNVTPCGLGARDTLRLEAGMHLYGQDINEETSPYEAGLGWLVHLENNHEFFGRRFLEEQSRLGIQKKLVGLSIEGKAIGRKGCAVLKGEENIGTITSGSWSPTKQQAIAFAYINTTHALINNEVQISIRGKKFKGVITKRAFYKKNY.

This sequence belongs to the GcvT family. In terms of assembly, the glycine cleavage system is composed of four proteins: P, T, L and H.

It catalyses the reaction N(6)-[(R)-S(8)-aminomethyldihydrolipoyl]-L-lysyl-[protein] + (6S)-5,6,7,8-tetrahydrofolate = N(6)-[(R)-dihydrolipoyl]-L-lysyl-[protein] + (6R)-5,10-methylene-5,6,7,8-tetrahydrofolate + NH4(+). In terms of biological role, the glycine cleavage system catalyzes the degradation of glycine. This chain is Aminomethyltransferase, found in Prochlorococcus marinus (strain MIT 9215).